We begin with the raw amino-acid sequence, 208 residues long: Small ribosomal subunit protein uS4 (208 aa).

One can recognise an S4 RNA-binding domain in the interval 98 to 159; sequence RRLDNVAYRL…KSRKVAAISE (62 aa).

It belongs to the universal ribosomal protein uS4 family. As to quaternary structure, part of the 30S ribosomal subunit. Contacts protein S5. The interaction surface between S4 and S5 is involved in control of translational fidelity.

One of the primary rRNA binding proteins, it binds directly to 16S rRNA where it nucleates assembly of the body of the 30S subunit. In terms of biological role, with S5 and S12 plays an important role in translational accuracy. This is Small ribosomal subunit protein uS4 from Geobacter sp. (strain M21).